The following is a 262-amino-acid chain: Flap endonuclease Xni (262 aa).

Residue aspartate 105 participates in Mg(2+) binding. Positions 164 to 251 (SQFLDLMALA…NINLKDFRAN (88 aa)) constitute a 5'-3' exonuclease domain. Residues leucine 172, alanine 173, proline 181, isoleucine 183, and isoleucine 186 each contribute to the K(+) site. The interval 185-190 (GIGPKS) is interaction with DNA.

It belongs to the Xni family. Requires Mg(2+) as cofactor. The cofactor is K(+).

In terms of biological role, has flap endonuclease activity. During DNA replication, flap endonucleases cleave the 5'-overhanging flap structure that is generated by displacement synthesis when DNA polymerase encounters the 5'-end of a downstream Okazaki fragment. The sequence is that of Flap endonuclease Xni from Shewanella putrefaciens (strain CN-32 / ATCC BAA-453).